A 147-amino-acid chain; its full sequence is 3-hydroxyacyl-[acyl-carrier-protein] dehydratase FabZ (147 aa).

The active site involves His51.

It belongs to the thioester dehydratase family. FabZ subfamily.

It localises to the cytoplasm. The enzyme catalyses a (3R)-hydroxyacyl-[ACP] = a (2E)-enoyl-[ACP] + H2O. In terms of biological role, involved in unsaturated fatty acids biosynthesis. Catalyzes the dehydration of short chain beta-hydroxyacyl-ACPs and long chain saturated and unsaturated beta-hydroxyacyl-ACPs. This is 3-hydroxyacyl-[acyl-carrier-protein] dehydratase FabZ from Anaplasma marginale (strain Florida).